The following is a 141-amino-acid chain: VLSAABKSBVKAAWGKVGGNAAPYGAZALZRMFLSFPTTKTYFPHFBLSHGSAZVKAHGZKVABALTKAVGHLBBLPGTLSBLSBLHAHKLRVBPVBFKLLSHSLLVTLATHLPBBFTPAVHASLBKFLABVSTVLTSKYR.

Positions 1–141 (VLSAABKSBV…VSTVLTSKYR (141 aa)) constitute a Globin domain. At serine 3 the chain carries Phosphoserine. Lysine 7 and lysine 11 each carry N6-succinyllysine. Lysine 16 carries the N6-acetyllysine; alternate modification. N6-succinyllysine; alternate is present on lysine 16. The residue at position 24 (tyrosine 24) is a Phosphotyrosine. The residue at position 35 (serine 35) is a Phosphoserine. Lysine 40 is modified (N6-succinyllysine). Phosphoserine is present on serine 49. O2 is bound at residue histidine 58. Histidine 87 serves as a coordination point for heme b. At serine 102 the chain carries Phosphoserine. Residue threonine 108 is modified to Phosphothreonine. Residue serine 124 is modified to Phosphoserine. 2 positions are modified to phosphothreonine: threonine 134 and threonine 137. A Phosphoserine modification is found at serine 138.

The protein belongs to the globin family. Heterotetramer of two alpha chains and two beta chains. In terms of tissue distribution, red blood cells.

Its function is as follows. Involved in oxygen transport from the lung to the various peripheral tissues. The sequence is that of Hemoglobin subunit alpha-1/2 from Odocoileus virginianus virginianus (Virginia white-tailed deer).